Consider the following 1132-residue polypeptide: Phytochrome B (1132 aa).

The segment covering 1-11 (MASGSRTKHSH) has biased composition (basic residues). The segment at 1–27 (MASGSRTKHSHQSGQGQVQAQSSGTSN) is disordered. Residues 12 to 26 (QSGQGQVQAQSSGTS) show a composition bias toward low complexity. The GAF domain maps to 231 to 409 (DVKLLCDTVV…AFGLQLNMEL (179 aa)). C336 contributes to the phytochromobilin binding site. 2 PAS domains span residues 623–694 (VARE…LRGE) and 757–828 (DYKA…MIVL). Residues 905 to 1125 (YLCQEIKSPL…LIILDLPMTR (221 aa)) form the Histidine kinase domain.

This sequence belongs to the phytochrome family. As to quaternary structure, homodimer. Contains one covalently linked phytochromobilin chromophore.

Its function is as follows. Regulatory photoreceptor which exists in two forms that are reversibly interconvertible by light: the Pr form that absorbs maximally in the red region of the spectrum and the Pfr form that absorbs maximally in the far-red region. Photoconversion of Pr to Pfr induces an array of morphogenic responses, whereas reconversion of Pfr to Pr cancels the induction of those responses. Pfr controls the expression of a number of nuclear genes including those encoding the small subunit of ribulose-bisphosphate carboxylase, chlorophyll A/B binding protein, protochlorophyllide reductase, rRNA, etc. It also controls the expression of its own gene(s) in a negative feedback fashion. In Nicotiana tabacum (Common tobacco), this protein is Phytochrome B (PHYB).